A 279-amino-acid polypeptide reads, in one-letter code: Shikimate dehydrogenase (NADP(+)) (279 aa).

Shikimate contacts are provided by residues 21–23 and Thr-68; that span reads SRS. The active-site Proton acceptor is Lys-72. Residue Asp-83 coordinates NADP(+). 2 residues coordinate shikimate: Asn-92 and Asp-107. NADP(+)-binding positions include 132 to 136, 156 to 161, and Leu-221; these read GAGGA and NRTVER. Residue Tyr-223 coordinates shikimate. Gly-244 lines the NADP(+) pocket.

It belongs to the shikimate dehydrogenase family. In terms of assembly, homodimer.

It catalyses the reaction shikimate + NADP(+) = 3-dehydroshikimate + NADPH + H(+). Its pathway is metabolic intermediate biosynthesis; chorismate biosynthesis; chorismate from D-erythrose 4-phosphate and phosphoenolpyruvate: step 4/7. Involved in the biosynthesis of the chorismate, which leads to the biosynthesis of aromatic amino acids. Catalyzes the reversible NADPH linked reduction of 3-dehydroshikimate (DHSA) to yield shikimate (SA). The sequence is that of Shikimate dehydrogenase (NADP(+)) from Nitrobacter winogradskyi (strain ATCC 25391 / DSM 10237 / CIP 104748 / NCIMB 11846 / Nb-255).